We begin with the raw amino-acid sequence, 189 residues long: UPF0301 protein RrIowa_0061 (189 aa).

Belongs to the UPF0301 (AlgH) family.

The protein is UPF0301 protein RrIowa_0061 of Rickettsia rickettsii (strain Iowa).